Consider the following 167-residue polypeptide: Translationally-controlled tumor protein homolog (167 aa).

The region spanning 1–167 (MIIYKDIFSG…WKHGIDEEKI (167 aa)) is the TCTP domain.

This sequence belongs to the TCTP family.

Its subcellular location is the cytoplasm. The protein localises to the cytoskeleton. Its function is as follows. Involved in protein synthesis. Involved in microtubule stabilization. This Candida glabrata (strain ATCC 2001 / BCRC 20586 / JCM 3761 / NBRC 0622 / NRRL Y-65 / CBS 138) (Yeast) protein is Translationally-controlled tumor protein homolog.